Consider the following 330-residue polypeptide: DNA primase small subunit PriS (330 aa).

Catalysis depends on residues D101 and D103. C116, C119, C128, and D131 together coordinate Zn(2+). The active site involves D235.

Belongs to the eukaryotic-type primase small subunit family. Heterodimer of a small subunit (PriS) and a large subunit (PriL). The cofactor is Mg(2+). Requires Mn(2+) as cofactor.

Functionally, catalytic subunit of DNA primase, an RNA polymerase that catalyzes the synthesis of short RNA molecules used as primers for DNA polymerase during DNA replication. The small subunit contains the primase catalytic core and has DNA synthesis activity on its own. Binding to the large subunit stabilizes and modulates the activity, increasing the rate of DNA synthesis while decreasing the length of the DNA fragments, and conferring RNA synthesis capability. The DNA polymerase activity may enable DNA primase to also catalyze primer extension after primer synthesis. May also play a role in DNA repair. Possesses a template-independent 3'-terminal nucleotidyl transferase activity. The sequence is that of DNA primase small subunit PriS from Saccharolobus solfataricus (strain ATCC 35092 / DSM 1617 / JCM 11322 / P2) (Sulfolobus solfataricus).